A 334-amino-acid chain; its full sequence is Ribosomal RNA small subunit methyltransferase H (334 aa).

Residues glycine 39–histidine 41, aspartate 59, phenylalanine 83, aspartate 100, and glutamine 107 each bind S-adenosyl-L-methionine. Residues glutamate 303–proline 334 are disordered.

It belongs to the methyltransferase superfamily. RsmH family.

The protein resides in the cytoplasm. The enzyme catalyses cytidine(1402) in 16S rRNA + S-adenosyl-L-methionine = N(4)-methylcytidine(1402) in 16S rRNA + S-adenosyl-L-homocysteine + H(+). Specifically methylates the N4 position of cytidine in position 1402 (C1402) of 16S rRNA. The polypeptide is Ribosomal RNA small subunit methyltransferase H (Verminephrobacter eiseniae (strain EF01-2)).